We begin with the raw amino-acid sequence, 185 residues long: RING-H2 finger protein ATL8 (185 aa).

Residues 28 to 48 (LVLILAVLLCALTCIIGLIAV) form a helical membrane-spanning segment. An RING-type; atypical zinc finger spans residues 104-146 (CAICLTEFAAGDELRVLPQCGHGFHVSCIDTWLGSHSSCPSCR). Residues 161–185 (PGSSSSGPEPDTRIKQREDGPDNLP) form a disordered region. Residues 170–185 (PDTRIKQREDGPDNLP) show a composition bias toward basic and acidic residues.

It belongs to the RING-type zinc finger family. ATL subfamily.

It localises to the membrane. The catalysed reaction is S-ubiquitinyl-[E2 ubiquitin-conjugating enzyme]-L-cysteine + [acceptor protein]-L-lysine = [E2 ubiquitin-conjugating enzyme]-L-cysteine + N(6)-ubiquitinyl-[acceptor protein]-L-lysine.. It participates in protein modification; protein ubiquitination. In Arabidopsis thaliana (Mouse-ear cress), this protein is RING-H2 finger protein ATL8 (ATL8).